The primary structure comprises 1111 residues: NBPF family member NBPF9 (1111 aa).

A coiled-coil region spans residues 70 to 130 (MLRNERQFKE…RSLNEHLQAL (61 aa)). Residues 161-198 (KLSPENDEDEDEDVQVEEDEKVLESSAPREVQKAEESK) are disordered. Acidic residues predominate over residues 165–181 (ENDEDEDEDVQVEEDEK). In terms of domain architecture, Olduvai 1 spans 165-259 (ENDEDEDEDV…ECQDALNILP (95 aa)). Residues 341 to 401 (MLRNERQFKE…RSLNEHLQAL (61 aa)) are a coiled coil. Olduvai domains are found at residues 436–528 (ENDN…HIIP), 529–600 (ENES…VDIG), 601–692 (RHRW…PSCP), 695–750 (SREL…LDLD), 751–843 (RIKK…RSKK), 844–919 (KRRR…LDVD), 920–1012 (RIKK…RSKK), and 1013–1111 (ERRR…IFPQ). Disordered stretches follow at residues 451–474 (EKVQKSSAPREMQKAEEKEVPEDS) and 510–569 (TLIG…STPS). Acidic residues-rich tracts occupy residues 530 to 539 (NESDDEEEEE) and 550 to 562 (ESEEEEVPQESWD). 2 disordered regions span residues 829 to 871 (KKGK…LDEK) and 999 to 1033 (KGKGKKRRGRRSKKERRRGRKEGEEDQNPPCPRLN). Basic residues-rich tracts occupy residues 831-849 (GKGKKRRGRRSKKKRRRGR) and 1000-1018 (GKGKKRRGRRSKKERRRGR).

It belongs to the NBPF family. As to expression, expressed in a neuroblastoma cell line.

It is found in the cytoplasm. This chain is NBPF family member NBPF9, found in Homo sapiens (Human).